We begin with the raw amino-acid sequence, 417 residues long: Imidazolonepropionase (417 aa).

Fe(3+)-binding residues include H80 and H82. Zn(2+) is bound by residues H80 and H82. Residues R89, Y152, and H187 each contribute to the 4-imidazolone-5-propanoate site. Y152 is an N-formimidoyl-L-glutamate binding site. H252 lines the Fe(3+) pocket. H252 provides a ligand contact to Zn(2+). Residue E255 participates in 4-imidazolone-5-propanoate binding. D326 serves as a coordination point for Fe(3+). D326 provides a ligand contact to Zn(2+). 2 residues coordinate N-formimidoyl-L-glutamate: N328 and G330. S331 is a 4-imidazolone-5-propanoate binding site.

Belongs to the metallo-dependent hydrolases superfamily. HutI family. Requires Zn(2+) as cofactor. The cofactor is Fe(3+).

The protein localises to the cytoplasm. The catalysed reaction is 4-imidazolone-5-propanoate + H2O = N-formimidoyl-L-glutamate. It participates in amino-acid degradation; L-histidine degradation into L-glutamate; N-formimidoyl-L-glutamate from L-histidine: step 3/3. Catalyzes the hydrolytic cleavage of the carbon-nitrogen bond in imidazolone-5-propanoate to yield N-formimidoyl-L-glutamate. It is the third step in the universal histidine degradation pathway. The sequence is that of Imidazolonepropionase from Bacteroides fragilis (strain ATCC 25285 / DSM 2151 / CCUG 4856 / JCM 11019 / LMG 10263 / NCTC 9343 / Onslow / VPI 2553 / EN-2).